Consider the following 348-residue polypeptide: RNA 3'-terminal phosphate cyclase (348 aa).

Residues Gln101 and 286–289 (HMAD) each bind ATP. His312 functions as the Tele-AMP-histidine intermediate in the catalytic mechanism.

This sequence belongs to the RNA 3'-terminal cyclase family. Type 1 subfamily.

The protein resides in the cytoplasm. It carries out the reaction a 3'-end 3'-phospho-ribonucleotide-RNA + ATP = a 3'-end 2',3'-cyclophospho-ribonucleotide-RNA + AMP + diphosphate. Its function is as follows. Catalyzes the conversion of 3'-phosphate to a 2',3'-cyclic phosphodiester at the end of RNA. The mechanism of action of the enzyme occurs in 3 steps: (A) adenylation of the enzyme by ATP; (B) transfer of adenylate to an RNA-N3'P to produce RNA-N3'PP5'A; (C) and attack of the adjacent 2'-hydroxyl on the 3'-phosphorus in the diester linkage to produce the cyclic end product. The biological role of this enzyme is unknown but it is likely to function in some aspects of cellular RNA processing. The protein is RNA 3'-terminal phosphate cyclase of Pyrobaculum aerophilum (strain ATCC 51768 / DSM 7523 / JCM 9630 / CIP 104966 / NBRC 100827 / IM2).